A 282-amino-acid polypeptide reads, in one-letter code: Trans,polycis-polyprenyl diphosphate synthase ((2Z,6E)-farnesyl diphosphate specific) (282 aa).

Positions 1-30 (MSPKTVFSTDTHREPIPPQPHPSGARPPQL) are disordered. The active site involves D44. D44 contributes to the Mg(2+) binding site. Residues 45–48 (GNGR), W49, R57, H61, and 89–91 (STE) contribute to the substrate site. The active-site Proton acceptor is the N92. Substrate is bound by residues W93, R95, R212, and 218–220 (RLS). E231 serves as a coordination point for Mg(2+). A disordered region spans residues 262-282 (GGAEPNPVGPPQSAAGAQGQD).

The protein belongs to the UPP synthase family. As to quaternary structure, homodimer. It depends on Mg(2+) as a cofactor.

The enzyme catalyses (2Z,6E)-farnesyl diphosphate + 10 isopentenyl diphosphate = di-trans,deca-cis-tridecaprenyl diphosphate + 10 diphosphate. It catalyses the reaction (2Z,6E)-farnesyl diphosphate + 11 isopentenyl diphosphate = di-trans,undeca-cis-tetradecaprenyl diphosphate + 11 diphosphate. The catalysed reaction is (2Z,6E)-farnesyl diphosphate + 9 isopentenyl diphosphate = di-trans,nona-cis-dodecaprenyl diphosphate + 9 diphosphate. Its function is as follows. Catalyzes the synthesis of Z,E-mixed prenyl diphosphates by a condensation of isopentenyl diphosphate to an allylic diphosphate. It shows a large substrate specificity accepting dimethylallyl diphosphate (DMAPP), GPP, E,Efarnesyl diphosphate (FPP), E,E,E-geranylgeranyl diphosphate (GGPP), neryl diphosphate (Z-GPP), and (2Z,6E)-farnesyl diphosphate (Z,E-FPP) as allylic substrates. The enzyme exhibits the highest activity when Z,E-FPP is employed as an allylic substrate. The major product is dodecaprenyl diphosphate (C60) under every allylic substrate conditions, but the enzyme is also able to synthesize even C70 prenyl diphosphate as the maximum chain-length product. This is Trans,polycis-polyprenyl diphosphate synthase ((2Z,6E)-farnesyl diphosphate specific) from Thermobifida fusca (strain YX).